A 564-amino-acid polypeptide reads, in one-letter code: Cytochrome c oxidase subunit 1 (564 aa).

The segment at 1–23 (MTAVAPRLENYAEPTRPAPTGGA) is disordered. Transmembrane regions (helical) follow at residues 43 to 63 (MMYI…ALLI), 83 to 103 (LFTL…VWGF), 122 to 142 (LNAF…AGFL), 171 to 191 (FWII…VNMI), 214 to 234 (IFVA…AALG), 259 to 279 (LFWF…FGIV), and 292 to 312 (FGYI…MAVW). His-87 serves as a coordination point for Fe(II)-heme a. Positions 265 and 269 each coordinate Cu cation. Positions 265–269 (HPEVY) form a cross-link, 1'-histidyl-3'-tyrosine (His-Tyr). Cu cation contacts are provided by His-314 and His-315. The next 2 helical transmembrane spans lie at 316-336 (MFVT…LISV) and 360-380 (MTWT…GIML). His-398 is a heme a3 binding site. 3 helical membrane passes run 399–419 (FHYT…YFWF), 434–454 (IHFW…HWVG), and 477–497 (ISTV…WNVF). His-400 is a Fe(II)-heme a binding site.

Belongs to the heme-copper respiratory oxidase family. As to quaternary structure, associates with subunits II, III and IV to form cytochrome c oxidase. Cu(2+) serves as cofactor. Heme is required as a cofactor.

The protein localises to the cell membrane. The enzyme catalyses 4 Fe(II)-[cytochrome c] + O2 + 8 H(+)(in) = 4 Fe(III)-[cytochrome c] + 2 H2O + 4 H(+)(out). Its pathway is energy metabolism; oxidative phosphorylation. Cytochrome c oxidase is the component of the respiratory chain that catalyzes the reduction of oxygen to water. Subunits 1-3 form the functional core of the enzyme complex. CO I is the catalytic subunit of the enzyme. Electrons originating in cytochrome c are transferred via the copper A center of subunit 2 and heme A of subunit 1 to the bimetallic center formed by heme A3 and copper B. This is Cytochrome c oxidase subunit 1 (ctaD) from Corynebacterium diphtheriae (strain ATCC 700971 / NCTC 13129 / Biotype gravis).